A 324-amino-acid chain; its full sequence is N-acetylmuramoyl-L-alanine amidase sle1 (324 aa).

Residues Met1–Ala25 form the signal peptide. LysM domains follow at residues Thr27–Val70, Thr84–Val127, and Ala147–Val190. In terms of domain architecture, Peptidase C51 spans Ser200–His324.

Its subcellular location is the secreted. The protein resides in the cell surface. The catalysed reaction is Hydrolyzes the link between N-acetylmuramoyl residues and L-amino acid residues in certain cell-wall glycopeptides.. In terms of biological role, peptidoglycan hydrolase involved in the splitting of the septum during cell division. The chain is N-acetylmuramoyl-L-alanine amidase sle1 (sle1) from Staphylococcus epidermidis (strain ATCC 12228 / FDA PCI 1200).